A 189-amino-acid polypeptide reads, in one-letter code: Adenylate kinase (189 aa).

G11 to T16 serves as a coordination point for ATP. An NMP region spans residues S31 to I60. AMP is bound by residues T32, R37, Q58–I60, G86–R89, and Q93. Positions K127–D137 are LID. R128 serves as a coordination point for ATP. AMP is bound by residues R134 and R145. G173 lines the ATP pocket.

The protein belongs to the adenylate kinase family. Monomer.

The protein resides in the cytoplasm. It catalyses the reaction AMP + ATP = 2 ADP. The protein operates within purine metabolism; AMP biosynthesis via salvage pathway; AMP from ADP: step 1/1. Catalyzes the reversible transfer of the terminal phosphate group between ATP and AMP. Plays an important role in cellular energy homeostasis and in adenine nucleotide metabolism. The chain is Adenylate kinase from Bacteroides thetaiotaomicron (strain ATCC 29148 / DSM 2079 / JCM 5827 / CCUG 10774 / NCTC 10582 / VPI-5482 / E50).